Reading from the N-terminus, the 610-residue chain is Myoneurin (610 aa).

Residues 24–89 enclose the BTB domain; sequence CDCTVVIGEF…IYTGTLNLDS (66 aa). The disordered stretch occupies residues 156 to 199; sequence SEVSTDSVQANPKPRALTKKSSQSKKKKKAFSSQKPGQSKAVQY. Residues 171–185 are compositionally biased toward basic residues; the sequence is ALTKKSSQSKKKKKA. 2 consecutive short sequence motifs (nuclear localization signal) follow at residues 174–190 and 257–262; these read KKSS…SSQK and KRKRRK. C2H2-type zinc fingers lie at residues 302–324, 330–352, 358–381, 387–409, 415–437, 443–465, 471–493, and 499–522; these read PMCN…MRIH, YVCH…VRTH, YKCE…RMHH, YKCD…ARKH, YVCD…VRRH, YVCD…SRKH, YICG…FRSH, and FICE…TKVH. Residues 519–548 form a disordered region; the sequence is TKVHSGTDKNPDCSVDDHAVSEQDSVQRSP. Positions 523 to 539 are enriched in basic and acidic residues; sequence SGTDKNPDCSVDDHAVS.

This sequence belongs to the krueppel C2H2-type zinc-finger protein family. As to expression, mainly expressed in the neuromuscular system. Located in and around synaptic myonuclei in adult muscle. Expression is dysregulated after nerve injury. Also found in the cerebellum, testis, heart, brain and liver.

The protein resides in the nucleus. In Mus musculus (Mouse), this protein is Myoneurin (Mynn).